The chain runs to 94 residues: Small ribosomal subunit protein uS17 (94 aa).

It belongs to the universal ribosomal protein uS17 family. Part of the 30S ribosomal subunit.

Functionally, one of the primary rRNA binding proteins, it binds specifically to the 5'-end of 16S ribosomal RNA. In Streptomyces avermitilis (strain ATCC 31267 / DSM 46492 / JCM 5070 / NBRC 14893 / NCIMB 12804 / NRRL 8165 / MA-4680), this protein is Small ribosomal subunit protein uS17.